The primary structure comprises 78 residues: MRPIIEFCLSNLASGSHDAMEELEKDPNLDIIEYGCLNHCGTCALDHFALVNGEYIAGDTPEELVSNIYKYLEENPMF.

Belongs to the UPF0349 family.

In Shouchella clausii (strain KSM-K16) (Alkalihalobacillus clausii), this protein is UPF0349 protein ABC2936.